A 748-amino-acid polypeptide reads, in one-letter code: Phosphoribosylformylglycinamidine synthase subunit PurL (748 aa).

Residue H47 is part of the active site. The ATP site is built by Y50 and K90. Residue E92 coordinates Mg(2+). Substrate contacts are provided by residues S93 to H96 and R115. H94 functions as the Proton acceptor in the catalytic mechanism. A Mg(2+)-binding site is contributed by D116. Residue Q240 participates in substrate binding. Position 268 (D268) interacts with Mg(2+). Position 312 to 314 (E312 to Q314) interacts with substrate. Residues N500 and G537 each contribute to the ATP site. N538 is a binding site for Mg(2+). S540 serves as a coordination point for substrate.

This sequence belongs to the FGAMS family. As to quaternary structure, monomer. Part of the FGAM synthase complex composed of 1 PurL, 1 PurQ and 2 PurS subunits.

It localises to the cytoplasm. It catalyses the reaction N(2)-formyl-N(1)-(5-phospho-beta-D-ribosyl)glycinamide + L-glutamine + ATP + H2O = 2-formamido-N(1)-(5-O-phospho-beta-D-ribosyl)acetamidine + L-glutamate + ADP + phosphate + H(+). It participates in purine metabolism; IMP biosynthesis via de novo pathway; 5-amino-1-(5-phospho-D-ribosyl)imidazole from N(2)-formyl-N(1)-(5-phospho-D-ribosyl)glycinamide: step 1/2. Functionally, part of the phosphoribosylformylglycinamidine synthase complex involved in the purines biosynthetic pathway. Catalyzes the ATP-dependent conversion of formylglycinamide ribonucleotide (FGAR) and glutamine to yield formylglycinamidine ribonucleotide (FGAM) and glutamate. The FGAM synthase complex is composed of three subunits. PurQ produces an ammonia molecule by converting glutamine to glutamate. PurL transfers the ammonia molecule to FGAR to form FGAM in an ATP-dependent manner. PurS interacts with PurQ and PurL and is thought to assist in the transfer of the ammonia molecule from PurQ to PurL. This Leptospira biflexa serovar Patoc (strain Patoc 1 / Ames) protein is Phosphoribosylformylglycinamidine synthase subunit PurL.